A 359-amino-acid polypeptide reads, in one-letter code: Protein-glutamate methylesterase/protein-glutamine glutaminase 1 (359 aa).

The Response regulatory domain maps to 4–121; the sequence is SVLIVDDSAV…RAFLLEAAKE (118 aa). At Asp55 the chain carries 4-aspartylphosphate. One can recognise a CheB-type methylesterase domain in the interval 169-354; that stretch reads YRTTEKIIAI…MSLERIAHML (186 aa). Residues Ser181, His207, and Asp303 contribute to the active site.

It belongs to the CheB family. Post-translationally, phosphorylated by CheA. Phosphorylation of the N-terminal regulatory domain activates the methylesterase activity.

It localises to the cytoplasm. It carries out the reaction [protein]-L-glutamate 5-O-methyl ester + H2O = L-glutamyl-[protein] + methanol + H(+). It catalyses the reaction L-glutaminyl-[protein] + H2O = L-glutamyl-[protein] + NH4(+). Involved in chemotaxis. Part of a chemotaxis signal transduction system that modulates chemotaxis in response to various stimuli. Catalyzes the demethylation of specific methylglutamate residues introduced into the chemoreceptors (methyl-accepting chemotaxis proteins or MCP) by CheR. Also mediates the irreversible deamidation of specific glutamine residues to glutamic acid. The polypeptide is Protein-glutamate methylesterase/protein-glutamine glutaminase 1 (Chromobacterium violaceum (strain ATCC 12472 / DSM 30191 / JCM 1249 / CCUG 213 / NBRC 12614 / NCIMB 9131 / NCTC 9757 / MK)).